Reading from the N-terminus, the 118-residue chain is Small ribosomal subunit protein uS13 (118 aa).

Residues 94–118 (GLPVRGQRTRTNARTRKGPRKAIKK) form a disordered region.

This sequence belongs to the universal ribosomal protein uS13 family. As to quaternary structure, part of the 30S ribosomal subunit. Forms a loose heterodimer with protein S19. Forms two bridges to the 50S subunit in the 70S ribosome.

Functionally, located at the top of the head of the 30S subunit, it contacts several helices of the 16S rRNA. In the 70S ribosome it contacts the 23S rRNA (bridge B1a) and protein L5 of the 50S subunit (bridge B1b), connecting the 2 subunits; these bridges are implicated in subunit movement. Contacts the tRNAs in the A and P-sites. This is Small ribosomal subunit protein uS13 from Thiobacillus denitrificans (strain ATCC 25259 / T1).